The following is a 379-amino-acid chain: UDP-4-amino-4-deoxy-L-arabinose--oxoglutarate aminotransferase (379 aa).

The residue at position 182 (K182) is an N6-(pyridoxal phosphate)lysine.

It belongs to the DegT/DnrJ/EryC1 family. ArnB subfamily. Homodimer. It depends on pyridoxal 5'-phosphate as a cofactor.

It catalyses the reaction UDP-4-amino-4-deoxy-beta-L-arabinose + 2-oxoglutarate = UDP-beta-L-threo-pentopyranos-4-ulose + L-glutamate. It participates in nucleotide-sugar biosynthesis; UDP-4-deoxy-4-formamido-beta-L-arabinose biosynthesis; UDP-4-deoxy-4-formamido-beta-L-arabinose from UDP-alpha-D-glucuronate: step 2/3. The protein operates within bacterial outer membrane biogenesis; lipopolysaccharide biosynthesis. Its function is as follows. Catalyzes the conversion of UDP-4-keto-arabinose (UDP-Ara4O) to UDP-4-amino-4-deoxy-L-arabinose (UDP-L-Ara4N). The modified arabinose is attached to lipid A and is required for resistance to polymyxin and cationic antimicrobial peptides. The polypeptide is UDP-4-amino-4-deoxy-L-arabinose--oxoglutarate aminotransferase (Shigella flexneri).